We begin with the raw amino-acid sequence, 153 residues long: Bacteriohemerythrin (153 aa).

His-21, His-57, Glu-61, His-76, His-80, His-115, and Asp-120 together coordinate Fe cation.

Belongs to the hemerythrin family. Monomer.

In terms of biological role, oxygen-binding protein. May be involved in a storage mechanism or for delivery to oxygen-requiring enzymes. The oxygen-binding site contains two iron atoms. The protein is Bacteriohemerythrin of Pseudomonas paraeruginosa (strain DSM 24068 / PA7) (Pseudomonas aeruginosa (strain PA7)).